We begin with the raw amino-acid sequence, 212 residues long: Ribosome maturation factor RimP (212 aa).

This sequence belongs to the RimP family.

Its subcellular location is the cytoplasm. Required for maturation of 30S ribosomal subunits. In Variovorax paradoxus (strain S110), this protein is Ribosome maturation factor RimP.